A 118-amino-acid polypeptide reads, in one-letter code: Fluoride-specific ion channel FluC 2 (118 aa).

4 helical membrane-spanning segments follow: residues Met-1–Ile-21, Phe-33–Gly-53, Gly-55–Phe-75, and Thr-93–Met-113. Positions 70 and 73 each coordinate Na(+).

The protein belongs to the fluoride channel Fluc/FEX (TC 1.A.43) family.

The protein localises to the cell membrane. It catalyses the reaction fluoride(in) = fluoride(out). With respect to regulation, na(+) is not transported, but it plays an essential structural role and its presence is essential for fluoride channel function. Functionally, fluoride-specific ion channel. Important for reducing fluoride concentration in the cell, thus reducing its toxicity. The chain is Fluoride-specific ion channel FluC 2 from Bacillus cereus (strain ZK / E33L).